The chain runs to 303 residues: Coenzyme PQQ synthesis protein B (303 aa).

The protein belongs to the PqqB family.

It participates in cofactor biosynthesis; pyrroloquinoline quinone biosynthesis. May be involved in the transport of PQQ or its precursor to the periplasm. This Pseudomonas entomophila (strain L48) protein is Coenzyme PQQ synthesis protein B.